The sequence spans 57 residues: Large ribosomal subunit protein bL32 (57 aa).

The segment at 1 to 21 is disordered; that stretch reads MAVQQRRSSKHRRDKRRSHDA. The segment covering 7-18 has biased composition (basic residues); it reads RSSKHRRDKRRS.

This sequence belongs to the bacterial ribosomal protein bL32 family.

This Mycoplasma pneumoniae (strain ATCC 29342 / M129 / Subtype 1) (Mycoplasmoides pneumoniae) protein is Large ribosomal subunit protein bL32 (rpmF).